We begin with the raw amino-acid sequence, 269 residues long: Formamidopyrimidine-DNA glycosylase (269 aa).

Pro2 (schiff-base intermediate with DNA) is an active-site residue. The active-site Proton donor is Glu3. The active-site Proton donor; for beta-elimination activity is Lys57. DNA is bound by residues His90, Arg109, and Lys150. An FPG-type zinc finger spans residues 235–269; the sequence is QVYGRAGEPCRACGTPIESAKHGQRSTFFCPRCQR. Arg259 acts as the Proton donor; for delta-elimination activity in catalysis.

This sequence belongs to the FPG family. As to quaternary structure, monomer. It depends on Zn(2+) as a cofactor.

It catalyses the reaction Hydrolysis of DNA containing ring-opened 7-methylguanine residues, releasing 2,6-diamino-4-hydroxy-5-(N-methyl)formamidopyrimidine.. It carries out the reaction 2'-deoxyribonucleotide-(2'-deoxyribose 5'-phosphate)-2'-deoxyribonucleotide-DNA = a 3'-end 2'-deoxyribonucleotide-(2,3-dehydro-2,3-deoxyribose 5'-phosphate)-DNA + a 5'-end 5'-phospho-2'-deoxyribonucleoside-DNA + H(+). In terms of biological role, involved in base excision repair of DNA damaged by oxidation or by mutagenic agents. Acts as a DNA glycosylase that recognizes and removes damaged bases. Has a preference for oxidized purines, such as 7,8-dihydro-8-oxoguanine (8-oxoG). Has AP (apurinic/apyrimidinic) lyase activity and introduces nicks in the DNA strand. Cleaves the DNA backbone by beta-delta elimination to generate a single-strand break at the site of the removed base with both 3'- and 5'-phosphates. In Serratia proteamaculans (strain 568), this protein is Formamidopyrimidine-DNA glycosylase.